Consider the following 204-residue polypeptide: 3-dehydroquinate dehydratase (204 aa).

Residues Ser9, 30–32, and Arg57 contribute to the 3-dehydroquinate site; that span reads ELR. His108 functions as the Proton donor/acceptor in the catalytic mechanism. Lys133 (schiff-base intermediate with substrate) is an active-site residue. Arg167, Thr186, and Gln190 together coordinate 3-dehydroquinate.

The protein belongs to the type-I 3-dehydroquinase family. In terms of assembly, homodimer.

The catalysed reaction is 3-dehydroquinate = 3-dehydroshikimate + H2O. It participates in metabolic intermediate biosynthesis; chorismate biosynthesis; chorismate from D-erythrose 4-phosphate and phosphoenolpyruvate: step 3/7. In terms of biological role, involved in the third step of the chorismate pathway, which leads to the biosynthesis of aromatic amino acids. Catalyzes the cis-dehydration of 3-dehydroquinate (DHQ) and introduces the first double bond of the aromatic ring to yield 3-dehydroshikimate. The chain is 3-dehydroquinate dehydratase from Metallosphaera sedula (strain ATCC 51363 / DSM 5348 / JCM 9185 / NBRC 15509 / TH2).